We begin with the raw amino-acid sequence, 151 residues long: Large ribosomal subunit protein eL8 (151 aa).

Belongs to the eukaryotic ribosomal protein eL8 family. As to quaternary structure, part of the 50S ribosomal subunit. Probably part of the RNase P complex.

It is found in the cytoplasm. Its function is as follows. Multifunctional RNA-binding protein that recognizes the K-turn motif in ribosomal RNA, the RNA component of RNase P, box H/ACA, box C/D and box C'/D' sRNAs. The sequence is that of Large ribosomal subunit protein eL8 from Pyrobaculum neutrophilum (strain DSM 2338 / JCM 9278 / NBRC 100436 / V24Sta) (Thermoproteus neutrophilus).